A 463-amino-acid chain; its full sequence is Quinolone resistance protein NorB (463 aa).

Helical transmembrane passes span 17–37 (IGIV…VNVV), 53–73 (IAVS…GGLA), 86–106 (IILN…LLLI), 107–127 (IGRL…LSII), 142–162 (YWSI…GAVA), 165–185 (LGWR…LFLI), 201–221 (FDIK…ILIT), 230–250 (SLLF…FIVL), 273–293 (TASN…NTFV), 299–319 (YSSL…LIMI), 334–354 (PMLI…LTFL), 357–377 (ILYV…LGIY), 403–423 (MASA…YAIV), and 435–455 (IALW…LLLV).

It belongs to the major facilitator superfamily. TCR/Tet family.

The protein localises to the cell membrane. Functionally, multidrug efflux pump that acts independently of NorA and is one of the factors that confers resistance against diverse quinolones and chemical compounds. Can facilitate bacterial survival in vivo when overexpressed in an abscess and may contribute to the relative resistance of staphylococcal abscesses to antimicrobial therapy. This chain is Quinolone resistance protein NorB (norB), found in Staphylococcus aureus (strain MW2).